We begin with the raw amino-acid sequence, 341 residues long: 3-dehydroquinate synthase (341 aa).

Residues 54–59 (DGEKYK), 88–92 (GVVTD), 112–113 (TT), K125, K133, and 151–154 (TLST) each bind NAD(+). 3 residues coordinate Zn(2+): E166, H220, and H236.

It belongs to the sugar phosphate cyclases superfamily. Dehydroquinate synthase family. Requires NAD(+) as cofactor. The cofactor is Co(2+). Zn(2+) serves as cofactor.

The protein localises to the cytoplasm. It carries out the reaction 7-phospho-2-dehydro-3-deoxy-D-arabino-heptonate = 3-dehydroquinate + phosphate. It functions in the pathway metabolic intermediate biosynthesis; chorismate biosynthesis; chorismate from D-erythrose 4-phosphate and phosphoenolpyruvate: step 2/7. Its function is as follows. Catalyzes the conversion of 3-deoxy-D-arabino-heptulosonate 7-phosphate (DAHP) to dehydroquinate (DHQ). The chain is 3-dehydroquinate synthase from Thermococcus kodakarensis (strain ATCC BAA-918 / JCM 12380 / KOD1) (Pyrococcus kodakaraensis (strain KOD1)).